The following is a 93-amino-acid chain: Non-histone chromosomal protein 6A (93 aa).

Disordered stretches follow at residues 1 to 23 (MVTP…APKR) and 69 to 93 (PYEA…ATLA). Basic residues predominate over residues 7–16 (PKKRTTRKKK). The HMG box DNA-binding region spans 21–89 (PKRALSAYMF…RYESEKELYN (69 aa)). Over residues 69–87 (PYEAKAQADKKRYESEKEL) the composition is skewed to basic and acidic residues.

The protein belongs to the NHP6 family. Weakly associates with the stable SPT16-POB3 heterodimer to form the FACT (yFACT or SNP) complex, which is associated with nucleosomes. Multiple molecules of NHP6 (NHP6A and/or NHP6B) are required to recruit the SPT16-POB3 heterodimer to DNA.

It is found in the nucleus. The protein resides in the chromosome. In terms of biological role, DNA-binding protein that induces severe bending of DNA. Required for DNA-binding by the FACT complex, a general chromatin factor that acts to reorganize nucleosomes. The FACT complex is involved in multiple processes that require DNA as a template such as mRNA elongation, DNA replication and DNA repair. Also augments the fidelity of transcription by RNA polymerase III independently of any role in the FACT complex. Required for transcriptional initiation fidelity of some but not all tRNA genes. Seems to be functionally redundant with NHP6B. The chain is Non-histone chromosomal protein 6A (NHP6A) from Saccharomyces cerevisiae (strain ATCC 204508 / S288c) (Baker's yeast).